A 432-amino-acid chain; its full sequence is Serine hydroxymethyltransferase (432 aa).

(6S)-5,6,7,8-tetrahydrofolate-binding positions include Leu127 and 131 to 133 (GHL). The residue at position 236 (Lys236) is an N6-(pyridoxal phosphate)lysine.

It belongs to the SHMT family. Homodimer. Pyridoxal 5'-phosphate serves as cofactor.

The protein localises to the cytoplasm. It catalyses the reaction (6R)-5,10-methylene-5,6,7,8-tetrahydrofolate + glycine + H2O = (6S)-5,6,7,8-tetrahydrofolate + L-serine. It functions in the pathway one-carbon metabolism; tetrahydrofolate interconversion. The protein operates within amino-acid biosynthesis; glycine biosynthesis; glycine from L-serine: step 1/1. In terms of biological role, catalyzes the reversible interconversion of serine and glycine with tetrahydrofolate (THF) serving as the one-carbon carrier. This reaction serves as the major source of one-carbon groups required for the biosynthesis of purines, thymidylate, methionine, and other important biomolecules. Also exhibits THF-independent aldolase activity toward beta-hydroxyamino acids, producing glycine and aldehydes, via a retro-aldol mechanism. This Rhizobium johnstonii (strain DSM 114642 / LMG 32736 / 3841) (Rhizobium leguminosarum bv. viciae) protein is Serine hydroxymethyltransferase.